Here is a 292-residue protein sequence, read N- to C-terminus: NAC domain-containing protein 105 (292 aa).

Residues 12-162 (IPPGFRFHPT…GWVVCRAFKK (151 aa)) form the NAC domain. Residues 112–168 (IGMRKTLVFYRGRAPNGQKSDWIIHEYYSLESHQNSPPQEEGWVVCRAFKKRTTIPT) mediate DNA binding. A compositionally biased stretch (polar residues) spans 237 to 259 (LPQLESPSLPSEITPHSTTFSEN). Positions 237-269 (LPQLESPSLPSEITPHSTTFSENSSRKDDMSSE) are disordered. Positions 260–269 (SSRKDDMSSE) are enriched in basic and acidic residues.

Belongs to the plant vascular related NAC-domain protein family. As to quaternary structure, interacts with NAC030/VND7. Detected in root protoxylem and metaxylem poles and in vessels of protoxylems, outermost metaxylems, inner metaxylems, shoots and hypocotyls. Expressed in roots, hypocotyls, cotyledons and leaves. Present in developing xylems. Present in root developing xylems. Specifically expressed in vessels but not in interfascicular fibers in stems.

The protein localises to the nucleus. Transcription activator that binds to the secondary wall NAC binding element (SNBE), 5'-(T/A)NN(C/T)(T/C/G)TNNNNNNNA(A/C)GN(A/C/T)(A/T)-3', in the promoter of target genes. Involved in xylem formation by promoting the expression of secondary wall-associated transcription factors and of genes involved in secondary wall biosynthesis and programmed cell death, genes driven by the secondary wall NAC binding element (SNBE). Triggers thickening of secondary walls. This is NAC domain-containing protein 105 from Arabidopsis thaliana (Mouse-ear cress).